The sequence spans 465 residues: Uridine kinase-like protein 5 (465 aa).

The tract at residues 26 to 230 (LKQPFVIGVA…IVQHIRTKLC (205 aa)) is uridine kinase. Residues 240–465 (NIFIISSTFQ…SLSTNLKLRS (226 aa)) are uracil phosphoribosyltransferase. GTP-binding positions include K264, R273, and 307 to 310 (CKRL). Positions 317 and 342 each coordinate 5-phospho-alpha-D-ribose 1-diphosphate. Residue R362 participates in GTP binding. Residues D368, 373-376 (SGYS), and E439 each bind 5-phospho-alpha-D-ribose 1-diphosphate. A uracil-binding site is contributed by 438–440 (GEF).

The protein in the N-terminal section; belongs to the uridine kinase family. In the C-terminal section; belongs to the UPRTase family. Requires Mg(2+) as cofactor.

The enzyme catalyses UMP + diphosphate = 5-phospho-alpha-D-ribose 1-diphosphate + uracil. It catalyses the reaction cytidine + ATP = CMP + ADP + H(+). The catalysed reaction is uridine + ATP = UMP + ADP + H(+). Its pathway is pyrimidine metabolism; UMP biosynthesis via salvage pathway; UMP from uracil: step 1/1. The protein operates within pyrimidine metabolism; CTP biosynthesis via salvage pathway; CTP from cytidine: step 1/3. It functions in the pathway pyrimidine metabolism; UMP biosynthesis via salvage pathway; UMP from uridine: step 1/1. Its activity is regulated as follows. Allosterically activated by GTP. Involved in the pyrimidine salvage pathway. The polypeptide is Uridine kinase-like protein 5 (UKL5) (Arabidopsis thaliana (Mouse-ear cress)).